The primary structure comprises 374 residues: Tuliposide A-converting enzyme b2, amyloplastic (374 aa).

Residues 1 to 68 (MSVALFCGPP…TNSSLSPSPT (68 aa)) constitute an amyloplast transit peptide. Residue serine 226 is the Acyl-ester intermediate of the active site. Active-site charge relay system residues include aspartate 316 and histidine 348.

This sequence belongs to the AB hydrolase superfamily. As to quaternary structure, homodimer. Highly expressed in pistil and bulb scales. Lower expression in stem, and barely detected in root, leaf, petal and stamen.

Its subcellular location is the plastid. The protein resides in the amyloplast. It catalyses the reaction 6-tuliposide A = tulipalin A + D-glucose. Its function is as follows. Lactone-forming carboxylesterases, specifically catalyzing intramolecular transesterification, but not hydrolysis. Involved in the biosynthesis of tulipalins, defensive chemicals that show antimicrobial activities against a broad range of strains of bacteria and fungi. Substrates are 6-tuliposide A &gt; 6-tuliposide B. This is Tuliposide A-converting enzyme b2, amyloplastic (TCEA-B2) from Tulipa gesneriana (Garden tulip).